The sequence spans 110 residues: Suppressor of silencing 2b (110 aa).

A disordered region spans residues 16 to 45; it reads ARMVEAKKQRRRSHKQNRRERGHKSPSERA. A Nuclear localization signal motif is present at residues 22-27; that stretch reads KKQRRR. A compositionally biased stretch (basic residues) spans 23–37; it reads KQRRRSHKQNRRERG.

The protein belongs to the cucumovirus/ilarvirus protein 2b family. As to quaternary structure, homotetramer. Interacts with host AGO1; this interaction blocks AGO1 cleavage activity to attenuate RNA silencing and thus counter host defense. Interacts with host JAZ.

The protein resides in the host nucleus. Multifunctional protein that plays two independent roles: viral suppressor of host RNAi (VSR) and viral inducer of host attractiveness to insect vectors (VIA). Acts as a suppressor of RNA-mediated gene silencing, also known as post-transcriptional gene silencing (PTGS), a mechanism of plant viral defense that limits the accumulation of viral RNAs. May directly interfere with mobile silencing signaling. Also inhibits signal transduction by the phytohormone jasmonate, making the infected plant more attractive to aphids, which are the second host to play a role as a dissemination vector. Acts by binding to and inhibiting JAZ degradation in the host. The sequence is that of Suppressor of silencing 2b from Cucurbita pepo (Vegetable marrow).